A 152-amino-acid polypeptide reads, in one-letter code: MTITDLVLILFIAALLAYALYDQFIMPRRNGPTLLSIALLRRGRVDSVIFVGLVAILIYNNVTSHGAQMTTWLLSALALMGFYIFWIRTPRIIFKQRGFFFANVWIEYNRIKEMNLSEDGVLVMQLEQRRLLIRVRNINDLEKIYKLLIENQ.

Transmembrane regions (helical) follow at residues 6 to 26 (LVLI…QFIM), 45 to 65 (VDSV…VTSH), and 67 to 87 (AQMT…IFWI).

The protein belongs to the UPF0266 family.

It localises to the cell inner membrane. This Salmonella agona (strain SL483) protein is UPF0266 membrane protein YobD.